A 309-amino-acid chain; its full sequence is Low density lipoprotein receptor adapter protein 1-A (309 aa).

Residues 41–195 (LLEGMLFHLK…SGGEGASSSQ (155 aa)) enclose the PID domain. The disordered stretch occupies residues 179–199 (EKREKSGSGGEGASSSQSDGS). Residues 213–217 (LLDLE) carry the Clathrin box motif. Positions 250–277 (WELDDGLDEAFARLAESRTNPQVLDIGL) are AP-2 complex binding. Positions 258–267 (EAFARLAESR) match the [DE]-X(1,2)-F-X-X-[FL]-X-X-X-R motif motif.

As to quaternary structure, interacts (via PID domain) with ldlr (via NPXY motif). Binds to soluble clathrin trimers and to the adapter protein complex 2 (AP-2, beta 2 subunit). Binds to phosphoinositides, which regulate clathrin bud assembly at the cell surface. Interacts with the VLDL receptor (vldlr). Interacts with the vitellogenin receptor. As to expression, expressed at high level during oogenesis and embryogenesis. Found in the oocyte vegetal cortex. Found at low level in the adult liver and spleen. Found at very low level in testis and heart.

Its subcellular location is the cytoplasm. Functionally, adapter protein (clathrin-associated sorting protein (CLASP)) required for efficient endocytosis of the LDL receptor (LDLR). Also involved in the vitellogenin receptor mediated endocytosis of nutrients during oogenesis. This Xenopus laevis (African clawed frog) protein is Low density lipoprotein receptor adapter protein 1-A.